The chain runs to 356 residues: Dihydroorotate dehydrogenase (quinone) (356 aa).

FMN is bound by residues 66-70 (AGFDK) and threonine 90. Lysine 70 is a substrate binding site. Residue 115-119 (NRMGF) coordinates substrate. The FMN site is built by asparagine 143 and asparagine 176. Asparagine 176 is a binding site for substrate. The active-site Nucleophile is serine 179. Substrate is bound at residue asparagine 181. FMN contacts are provided by lysine 212 and threonine 240. 241–242 (NT) is a substrate binding site. FMN is bound by residues glycine 266, glycine 295, and 316-317 (YT).

This sequence belongs to the dihydroorotate dehydrogenase family. Type 2 subfamily. As to quaternary structure, monomer. The cofactor is FMN.

Its subcellular location is the cell membrane. It catalyses the reaction (S)-dihydroorotate + a quinone = orotate + a quinol. It functions in the pathway pyrimidine metabolism; UMP biosynthesis via de novo pathway; orotate from (S)-dihydroorotate (quinone route): step 1/1. Its function is as follows. Catalyzes the conversion of dihydroorotate to orotate with quinone as electron acceptor. The polypeptide is Dihydroorotate dehydrogenase (quinone) (Rhodococcus erythropolis (strain PR4 / NBRC 100887)).